The chain runs to 222 residues: Ubiquitin-conjugating enzyme E2 S (222 aa).

Met-1 is subject to N-acetylmethionine. The region spanning 11–157 (HIIRLVYKEV…ARLLTEIHGG (147 aa)) is the UBC core domain. Cys-95 functions as the Glycyl thioester intermediate in the catalytic mechanism. Residues 156 to 222 (GGAGGPSGRA…TDKKRALRRL (67 aa)) are disordered. Position 173 is a phosphoserine (Ser-173). Basic residues predominate over residues 208 to 222 (AAKKKTDKKRALRRL).

This sequence belongs to the ubiquitin-conjugating enzyme family. As to quaternary structure, component of the APC/C complex, composed of at least 14 distinct subunits that assemble into a complex of at least 19 chains with a combined molecular mass of around 1.2 MDa. Within this complex, directly interacts with ANAPC2 and ANAPC4. Interacts with CDC20, FZR1/CDH1 and VHL. Post-translationally, autoubiquitinated by the APC/C complex during G1, leading to its degradation by the proteasome.

It catalyses the reaction S-ubiquitinyl-[E1 ubiquitin-activating enzyme]-L-cysteine + [E2 ubiquitin-conjugating enzyme]-L-cysteine = [E1 ubiquitin-activating enzyme]-L-cysteine + S-ubiquitinyl-[E2 ubiquitin-conjugating enzyme]-L-cysteine.. The protein operates within protein modification; protein ubiquitination. Functionally, accepts ubiquitin from the E1 complex and catalyzes its covalent attachment to other proteins. Catalyzes 'Lys-11'-linked polyubiquitination. Acts as an essential factor of the anaphase promoting complex/cyclosome (APC/C), a cell cycle-regulated ubiquitin ligase that controls progression through mitosis. Acts by specifically elongating 'Lys-11'-linked polyubiquitin chains initiated by the E2 enzyme UBE2C/UBCH10 on APC/C substrates, enhancing the degradation of APC/C substrates by the proteasome and promoting mitotic exit. Also acts by elongating ubiquitin chains initiated by the E2 enzyme UBE2D1/UBCH5 in vitro; it is however unclear whether UBE2D1/UBCH5 acts as an E2 enzyme for the APC/C in vivo. Also involved in ubiquitination and subsequent degradation of VHL, resulting in an accumulation of HIF1A. In vitro able to promote polyubiquitination using all 7 ubiquitin Lys residues, except 'Lys-48'-linked polyubiquitination. This chain is Ubiquitin-conjugating enzyme E2 S (UBE2S), found in Homo sapiens (Human).